We begin with the raw amino-acid sequence, 199 residues long: Protein GrpE (199 aa).

A compositionally biased stretch (basic and acidic residues) spans 1 to 24; the sequence is MSKQNKKDWKKFRDEHKEEHKVEN. A disordered region spans residues 1–52; it reads MSKQNKKDWKKFRDEHKEEHKVENEILEEETDEESQHQEPALGHPSYTALEE.

This sequence belongs to the GrpE family. Homodimer.

The protein localises to the cytoplasm. Participates actively in the response to hyperosmotic and heat shock by preventing the aggregation of stress-denatured proteins, in association with DnaK and GrpE. It is the nucleotide exchange factor for DnaK and may function as a thermosensor. Unfolded proteins bind initially to DnaJ; upon interaction with the DnaJ-bound protein, DnaK hydrolyzes its bound ATP, resulting in the formation of a stable complex. GrpE releases ADP from DnaK; ATP binding to DnaK triggers the release of the substrate protein, thus completing the reaction cycle. Several rounds of ATP-dependent interactions between DnaJ, DnaK and GrpE are required for fully efficient folding. This is Protein GrpE from Legionella pneumophila (strain Lens).